A 160-amino-acid chain; its full sequence is RNA pyrophosphohydrolase (160 aa).

The region spanning Pro-10–Asp-154 is the Nudix hydrolase domain. A Nudix box motif is present at residues Gly-44–Gly-65.

Belongs to the Nudix hydrolase family. RppH subfamily. A divalent metal cation serves as cofactor.

Functionally, accelerates the degradation of transcripts by removing pyrophosphate from the 5'-end of triphosphorylated RNA, leading to a more labile monophosphorylated state that can stimulate subsequent ribonuclease cleavage. This Dinoroseobacter shibae (strain DSM 16493 / NCIMB 14021 / DFL 12) protein is RNA pyrophosphohydrolase.